Here is a 277-residue protein sequence, read N- to C-terminus: Shikimate dehydrogenase (NADP(+)) (277 aa).

Shikimate contacts are provided by residues 15-17 and T62; that span reads SLS. K66 (proton acceptor) is an active-site residue. N87 and D102 together coordinate shikimate. Residues 127-131, 151-156, and I219 each bind NADP(+); these read GAGGA and NRTVDK. Residue Y221 coordinates shikimate. G242 is a binding site for NADP(+).

This sequence belongs to the shikimate dehydrogenase family. In terms of assembly, homodimer.

The enzyme catalyses shikimate + NADP(+) = 3-dehydroshikimate + NADPH + H(+). The protein operates within metabolic intermediate biosynthesis; chorismate biosynthesis; chorismate from D-erythrose 4-phosphate and phosphoenolpyruvate: step 4/7. Functionally, involved in the biosynthesis of the chorismate, which leads to the biosynthesis of aromatic amino acids. Catalyzes the reversible NADPH linked reduction of 3-dehydroshikimate (DHSA) to yield shikimate (SA). The chain is Shikimate dehydrogenase (NADP(+)) from Bacillus thuringiensis subsp. konkukian (strain 97-27).